The primary structure comprises 1461 residues: Major viral transcription factor ICP4 homolog (1461 aa).

Disordered stretches follow at residues 25–60 (AAEEEGIASGPDGGSQGSRRRGSSGEDLLFGPGGLF), 75–518 (AAGA…SREG), 811–1002 (RPGP…PRPS), and 1395–1461 (AGGA…LLLR). Residues 75–90 (AAGATRPPRPPSAQQQ) show a composition bias toward low complexity. The segment covering 102 to 113 (VLDDEDEEEDEP) has biased composition (acidic residues). Low complexity-rich tracts occupy residues 167–197 (RSSPSAASPASSSSGSSGSSGSPGPSAAPRR) and 224–249 (PAAVAAAPARRGPASPASPAAGPVSA). Over residues 250-260 (PGGGGAPSGGG) the composition is skewed to gly residues. Over residues 270 to 285 (REPLLDEPAAARRLDP) the composition is skewed to basic and acidic residues. Composition is skewed to low complexity over residues 292–308 (SPVSSNPNSSSSSTTTV) and 353–405 (GFSS…SSSS). A compositionally biased stretch (pro residues) spans 423–434 (GPPPSPPAPAAA). Over residues 435-453 (PRPSASSASATSSSAAASP) the composition is skewed to low complexity. The segment covering 814–826 (PAEPAPGLPPLWP) has biased composition (pro residues). Residues 838 to 888 (PAAAGAPSGLPGSGPSSPASTKSGSSTKSSSGTKSGLSGSSGYASSPAAGP) are compositionally biased toward low complexity. Basic residues predominate over residues 894-903 (RRKKKRRAPG). Residues 944–965 (LGLGPAPDPAPALVSSSSSSSS) are compositionally biased toward low complexity.

It belongs to the herpesviridae ICP4 family. A long stretch of serine residues may be a major site of phosphorylation.

Its subcellular location is the host nucleus. This IE protein is a multifunctional protein capable of migrating to the nucleus, binding to DNA, trans-activating other viral genes, and autoregulating its own synthesis. The chain is Major viral transcription factor ICP4 homolog (IE) from Sus scrofa (Pig).